The sequence spans 280 residues: Alpha-aminoadipate--LysW ligase LysX (280 aa).

ATP-binding positions include K89, K129, G133–L139, Q169–R180, R194, and N202. Positions S93 to W276 constitute an ATP-grasp domain. Residues D237, E249, and N251 each contribute to the Mg(2+) site. The short motif at N258–S259 is the N-[TS] motif that is essential for LysX substrate specificity element.

This sequence belongs to the RimK family. LysX subfamily. Homodimer. It depends on Mg(2+) as a cofactor.

It carries out the reaction [amino-group carrier protein]-C-terminal-L-glutamate + L-2-aminoadipate + ATP = [amino-group carrier protein]-C-terminal-N-(1,4-dicarboxybutan-1-yl)-L-glutamine + ADP + phosphate + H(+). Its pathway is amino-acid biosynthesis; L-lysine biosynthesis via AAA pathway; L-lysine from L-alpha-aminoadipate (Thermus route): step 1/5. In terms of biological role, catalyzes the ATP-dependent formation of a covalent bond between the amino group of alpha-aminoadipate (AAA) and the gamma-carboxyl group of the C-terminal glutamate residue in LysW. This chain is Alpha-aminoadipate--LysW ligase LysX (lysX), found in Thermus thermophilus (strain ATCC 27634 / DSM 579 / HB8).